A 396-amino-acid chain; its full sequence is Tryptophan synthase beta chain (396 aa).

Position 86 is an N6-(pyridoxal phosphate)lysine (lysine 86).

This sequence belongs to the TrpB family. Tetramer of two alpha and two beta chains. Pyridoxal 5'-phosphate serves as cofactor.

It carries out the reaction (1S,2R)-1-C-(indol-3-yl)glycerol 3-phosphate + L-serine = D-glyceraldehyde 3-phosphate + L-tryptophan + H2O. It participates in amino-acid biosynthesis; L-tryptophan biosynthesis; L-tryptophan from chorismate: step 5/5. In terms of biological role, the beta subunit is responsible for the synthesis of L-tryptophan from indole and L-serine. The polypeptide is Tryptophan synthase beta chain (Yersinia pseudotuberculosis serotype O:1b (strain IP 31758)).